The primary structure comprises 118 residues: Large ribosomal subunit protein uL18 (118 aa).

Residues Met1–Gly24 form a disordered region. Residues Ile10 to Gly20 show a composition bias toward basic residues.

It belongs to the universal ribosomal protein uL18 family. Part of the 50S ribosomal subunit; part of the 5S rRNA/L5/L18/L25 subcomplex. Contacts the 5S and 23S rRNAs.

Functionally, this is one of the proteins that bind and probably mediate the attachment of the 5S RNA into the large ribosomal subunit, where it forms part of the central protuberance. The protein is Large ribosomal subunit protein uL18 of Streptococcus mutans serotype c (strain ATCC 700610 / UA159).